We begin with the raw amino-acid sequence, 490 residues long: Cardiolipin synthase A (490 aa).

2 helical membrane passes run 20–40 (LGLL…HAVL) and 49–69 (IAWA…YLVF). PLD phosphodiesterase domains follow at residues 229 to 256 (VNFR…GVEY) and 403 to 430 (QPGF…DNRS). Active-site residues include His-234, Lys-236, Asp-241, His-408, Lys-410, and Asp-415.

It belongs to the phospholipase D family. Cardiolipin synthase subfamily. ClsA sub-subfamily.

The protein localises to the cell inner membrane. The enzyme catalyses 2 a 1,2-diacyl-sn-glycero-3-phospho-(1'-sn-glycerol) = a cardiolipin + glycerol. Functionally, catalyzes the reversible phosphatidyl group transfer from one phosphatidylglycerol molecule to another to form cardiolipin (CL) (diphosphatidylglycerol) and glycerol. The chain is Cardiolipin synthase A from Pseudomonas aeruginosa (strain LESB58).